Reading from the N-terminus, the 410-residue chain is MLLAIAFLASVCVSSRSDQENPFIFKSNRFQTLYENENGHIRLLQKFDKRSKIFENLQNYRLLEYKSKPHTLFLPQYTDADFILVVLSGKATLTVLKSNDRNSFNLERGDAIKLPAGSIAYFANRDDNEEPRVLDLAIPVNKPGQLQSFLLSGTQNQKSSLSGFSKNILEAAFNTNYEEIEKVLLEQQEQEPQHRRSLKDRRQEINEENVIVKVSRDQIEELSKNAKSSSKKSVSSESGPFNLRSRNPIYSNKFGKFFEITPEKNQQLQDLDIFVNSVDIKVGSLLLPNYNSRAIVIVTVTEGKGDFELVGQRNENQGKENDKEEEQEEETSKQVQLYRAKLSPGDVFVIPAGHPVAINASSDLNLIGLGINAENNERNFLAGEEDNVISQVERPVKELAFPGSSHEVDR.

The N-terminal stretch at 1-15 (MLLAIAFLASVCVSS) is a signal peptide. Positions 23–181 (FIFKSNRFQT…AFNTNYEEIE (159 aa)) constitute a Cupin type-1 1 domain. Disordered regions lie at residues 223-242 (SKNAKSSSKKSVSSESGPFN) and 312-331 (QRNENQGKENDKEEEQEEET). A compositionally biased stretch (low complexity) spans 225–238 (NAKSSSKKSVSSES). The region spanning 241-409 (FNLRSRNPIY…AFPGSSHEVD (169 aa)) is the Cupin type-1 2 domain. Residue Asn359 is glycosylated (N-linked (GlcNAc...) asparagine).

It belongs to the 7S seed storage protein family.

The protein resides in the vacuole. The protein localises to the aleurone grain. Functionally, seed storage protein. This Pisum sativum (Garden pea) protein is Provicilin.